The primary structure comprises 92 residues: PqqA binding protein (92 aa).

This sequence belongs to the PqqD family. As to quaternary structure, monomer. Interacts with PqqE.

It functions in the pathway cofactor biosynthesis; pyrroloquinoline quinone biosynthesis. Functions as a PqqA binding protein and presents PqqA to PqqE, in the pyrroloquinoline quinone (PQQ) biosynthetic pathway. This chain is PqqA binding protein, found in Xanthomonas campestris pv. campestris (strain B100).